A 447-amino-acid polypeptide reads, in one-letter code: Tubulin beta-1 chain (447 aa).

Gln11 serves as a coordination point for GTP. The residue at position 40 (Ser40) is a Phosphoserine. GTP-binding residues include Glu69, Ser138, Gly142, Thr143, Gly144, Asn204, and Asn226. Glu69 is a binding site for Mg(2+). At Ser339 the chain carries Phosphoserine. Residues 427–447 (EATADEDAEFEEEQEAEVDEN) form a disordered region. Acidic residues predominate over residues 429–447 (TADEDAEFEEEQEAEVDEN).

The protein belongs to the tubulin family. In terms of assembly, dimer of alpha and beta chains. A typical microtubule is a hollow water-filled tube with an outer diameter of 25 nm and an inner diameter of 15 nM. Alpha-beta heterodimers associate head-to-tail to form protofilaments running lengthwise along the microtubule wall with the beta-tubulin subunit facing the microtubule plus end conferring a structural polarity. Microtubules usually have 13 protofilaments but different protofilament numbers can be found in some organisms and specialized cells. Interacts with mgr and Vhl. It depends on Mg(2+) as a cofactor.

The protein resides in the cytoplasm. It localises to the cytoskeleton. Tubulin is the major constituent of microtubules, a cylinder consisting of laterally associated linear protofilaments composed of alpha- and beta-tubulin heterodimers. Microtubules grow by the addition of GTP-tubulin dimers to the microtubule end, where a stabilizing cap forms. Below the cap, tubulin dimers are in GDP-bound state, owing to GTPase activity of alpha-tubulin. In Drosophila melanogaster (Fruit fly), this protein is Tubulin beta-1 chain (betaTub56D).